Reading from the N-terminus, the 504-residue chain is Signal transduction histidine-protein kinase/phosphatase MprB (504 aa).

Residues 1 to 26 lie on the Cytoplasmic side of the membrane; it reads MWWFRRRDRAPLRATSSLSLRWRVML. The chain crosses the membrane as a helical span at residues 27 to 47; it reads LAMSMVAMVVVLMSFAVYAVI. Topologically, residues 48-163 are extracellular; it reads SAALYSDIDN…PTEAVMNKLR (116 aa). Residues 164-184 form a helical membrane-spanning segment; it reads WVLLIVGGIGVAVAAVAGGMV. Residues 185–504 are Cytoplasmic-facing; sequence TRAGLRPVGR…SVESQSTRAT (320 aa). Positions 186–238 constitute an HAMP domain; sequence RAGLRPVGRLTEAAERVARTDDLRPIPVFGSDELARLTEAFNLMLRALAESRE. The Histidine kinase domain occupies 246–466; sequence DAGHELRTPL…SIYVLLPGRR (221 aa). The residue at position 249 (His249) is a Phosphohistidine; by autocatalysis. The disordered stretch occupies residues 471-504; sequence QLPGATAGARSTDIENSRGSANVISVESQSTRAT. Over residues 487 to 504 the composition is skewed to polar residues; that stretch reads SRGSANVISVESQSTRAT.

Mg(2+) is required as a cofactor. Requires Mn(2+) as cofactor. Post-translationally, autophosphorylated.

It localises to the cell membrane. It catalyses the reaction ATP + protein L-histidine = ADP + protein N-phospho-L-histidine.. Member of the two-component regulatory system MprB/MprA which contributes to maintaining a balance among several systems involved in stress resistance and is required for establishment and maintenance of persistent infection in the host. In response to environmental signals MprB acts both as a membrane-associated protein kinase that undergoes autophosphorylation and subsequently transfers the phosphate to MprA, and a protein phosphatase that dephosphorylates phospho-MprA. MprB/MprA up-regulates expression of mprA and pepD. This chain is Signal transduction histidine-protein kinase/phosphatase MprB (mprB), found in Mycobacterium bovis (strain ATCC BAA-935 / AF2122/97).